Here is a 319-residue protein sequence, read N- to C-terminus: Acetyl-coenzyme A carboxylase carboxyl transferase subunit alpha (319 aa).

The 262-residue stretch at 35-296 (NIDEEVHRLR…KAQLLEDLAD (262 aa)) folds into the CoA carboxyltransferase C-terminal domain.

The protein belongs to the AccA family. As to quaternary structure, acetyl-CoA carboxylase is a heterohexamer composed of biotin carboxyl carrier protein (AccB), biotin carboxylase (AccC) and two subunits each of ACCase subunit alpha (AccA) and ACCase subunit beta (AccD).

The protein resides in the cytoplasm. It catalyses the reaction N(6)-carboxybiotinyl-L-lysyl-[protein] + acetyl-CoA = N(6)-biotinyl-L-lysyl-[protein] + malonyl-CoA. It participates in lipid metabolism; malonyl-CoA biosynthesis; malonyl-CoA from acetyl-CoA: step 1/1. Component of the acetyl coenzyme A carboxylase (ACC) complex. First, biotin carboxylase catalyzes the carboxylation of biotin on its carrier protein (BCCP) and then the CO(2) group is transferred by the carboxyltransferase to acetyl-CoA to form malonyl-CoA. In Salmonella agona (strain SL483), this protein is Acetyl-coenzyme A carboxylase carboxyl transferase subunit alpha.